A 192-amino-acid chain; its full sequence is LOB domain-containing protein 32 (192 aa).

Residues 4–105 (NRCAVCKILN…QDIESAVNEL (102 aa)) form the LOB domain.

The protein belongs to the LOB domain-containing protein family.

The protein is LOB domain-containing protein 32 (LBD32) of Arabidopsis thaliana (Mouse-ear cress).